The following is a 617-amino-acid chain: 1-deoxy-D-xylulose-5-phosphate synthase (617 aa).

Residues histidine 76 and 117–119 (GHS) contribute to the thiamine diphosphate site. Position 148 (aspartate 148) interacts with Mg(2+). Residues 149-150 (GA), asparagine 177, tyrosine 285, and glutamate 366 contribute to the thiamine diphosphate site. Residue asparagine 177 coordinates Mg(2+).

It belongs to the transketolase family. DXPS subfamily. Homodimer. Mg(2+) serves as cofactor. The cofactor is thiamine diphosphate.

The catalysed reaction is D-glyceraldehyde 3-phosphate + pyruvate + H(+) = 1-deoxy-D-xylulose 5-phosphate + CO2. It participates in metabolic intermediate biosynthesis; 1-deoxy-D-xylulose 5-phosphate biosynthesis; 1-deoxy-D-xylulose 5-phosphate from D-glyceraldehyde 3-phosphate and pyruvate: step 1/1. In terms of biological role, catalyzes the acyloin condensation reaction between C atoms 2 and 3 of pyruvate and glyceraldehyde 3-phosphate to yield 1-deoxy-D-xylulose-5-phosphate (DXP). In Histophilus somni (strain 129Pt) (Haemophilus somnus), this protein is 1-deoxy-D-xylulose-5-phosphate synthase.